We begin with the raw amino-acid sequence, 155 residues long: Small ribosomal subunit protein uS7cz/uS7cy (155 aa).

The protein belongs to the universal ribosomal protein uS7 family. As to quaternary structure, part of the 30S ribosomal subunit.

It is found in the plastid. The protein localises to the chloroplast. Functionally, one of the primary rRNA binding proteins, it binds directly to 16S rRNA where it nucleates assembly of the head domain of the 30S subunit. This is Small ribosomal subunit protein uS7cz/uS7cy (rps7-A) from Guizotia abyssinica (Niger).